The chain runs to 199 residues: uncharacterized protein (199 aa).

Residues I21–I38 form a helical membrane-spanning segment.

It localises to the membrane. This is an uncharacterized protein from Saccharomyces cerevisiae (strain ATCC 204508 / S288c) (Baker's yeast).